The sequence spans 491 residues: Probable cytosol aminopeptidase (491 aa).

Residues Lys-261 and Asp-266 each contribute to the Mn(2+) site. The active site involves Lys-273. Residues Asp-285, Asp-344, and Glu-346 each coordinate Mn(2+). Arg-348 is a catalytic residue.

The protein belongs to the peptidase M17 family. The cofactor is Mn(2+).

Its subcellular location is the cytoplasm. It carries out the reaction Release of an N-terminal amino acid, Xaa-|-Yaa-, in which Xaa is preferably Leu, but may be other amino acids including Pro although not Arg or Lys, and Yaa may be Pro. Amino acid amides and methyl esters are also readily hydrolyzed, but rates on arylamides are exceedingly low.. It catalyses the reaction Release of an N-terminal amino acid, preferentially leucine, but not glutamic or aspartic acids.. In terms of biological role, presumably involved in the processing and regular turnover of intracellular proteins. Catalyzes the removal of unsubstituted N-terminal amino acids from various peptides. The polypeptide is Probable cytosol aminopeptidase (Picosynechococcus sp. (strain ATCC 27264 / PCC 7002 / PR-6) (Agmenellum quadruplicatum)).